A 330-amino-acid polypeptide reads, in one-letter code: Fructose-1,6-bisphosphatase class 1 (330 aa).

Residues Glu-84, Asp-103, Leu-105, and Asp-106 each coordinate Mg(2+). Residues 106-109 (DGSS), Asn-196, and Lys-262 each bind substrate. Glu-268 serves as a coordination point for Mg(2+).

This sequence belongs to the FBPase class 1 family. In terms of assembly, homotetramer. Mg(2+) serves as cofactor.

The protein localises to the cytoplasm. It catalyses the reaction beta-D-fructose 1,6-bisphosphate + H2O = beta-D-fructose 6-phosphate + phosphate. The protein operates within carbohydrate biosynthesis; gluconeogenesis. This is Fructose-1,6-bisphosphatase class 1 from Shewanella sp. (strain W3-18-1).